A 130-amino-acid polypeptide reads, in one-letter code: Small ribosomal subunit protein uS9 (130 aa).

Belongs to the universal ribosomal protein uS9 family.

The polypeptide is Small ribosomal subunit protein uS9 (Edwardsiella ictaluri (strain 93-146)).